We begin with the raw amino-acid sequence, 37 residues long: MSDIN-like toxin proprotein 5 (37 aa).

Residues 1–10 (MSDINATRLP) constitute a propeptide that is removed on maturation. The cyclopeptide (Leu-Pro) cross-link spans 11–20 (LFFPPDFRPP). The propeptide occupies 21–37 (CVGDADNFTLTRGENLC).

The protein belongs to the MSDIN fungal toxin family. Processed by the macrocyclase-peptidase enzyme POPB to yield a toxic cyclic decapeptide. POPB first removes 10 residues from the N-terminus. Conformational trapping of the remaining peptide forces the enzyme to release this intermediate rather than proceed to macrocyclization. The enzyme rebinds the remaining peptide in a different conformation and catalyzes macrocyclization of the N-terminal 10 residues. As to expression, expressed in basidiocarps.

In terms of biological role, probable toxin that belongs to the MSDIN-like toxin family responsible for a large number of food poisoning cases and deaths. This is MSDIN-like toxin proprotein 5 from Amanita exitialis (Guangzhou destroying angel).